Here is a 244-residue protein sequence, read N- to C-terminus: Small ribosomal subunit protein uS2 (244 aa).

It belongs to the universal ribosomal protein uS2 family.

The sequence is that of Small ribosomal subunit protein uS2 from Buchnera aphidicola subsp. Acyrthosiphon pisum (strain 5A).